Reading from the N-terminus, the 444-residue chain is 3-phosphoshikimate 1-carboxyvinyltransferase (444 aa).

Lys-24, Ser-25, and Arg-29 together coordinate 3-phosphoshikimate. Lys-24 is a phosphoenolpyruvate binding site. 2 residues coordinate phosphoenolpyruvate: Gly-97 and Arg-125. Positions 170, 172, 318, and 345 each coordinate 3-phosphoshikimate. Gln-172 is a phosphoenolpyruvate binding site. Asp-318 functions as the Proton acceptor in the catalytic mechanism. Phosphoenolpyruvate-binding residues include Arg-349 and Arg-391.

This sequence belongs to the EPSP synthase family. Monomer.

It is found in the cytoplasm. The enzyme catalyses 3-phosphoshikimate + phosphoenolpyruvate = 5-O-(1-carboxyvinyl)-3-phosphoshikimate + phosphate. It participates in metabolic intermediate biosynthesis; chorismate biosynthesis; chorismate from D-erythrose 4-phosphate and phosphoenolpyruvate: step 6/7. Functionally, catalyzes the transfer of the enolpyruvyl moiety of phosphoenolpyruvate (PEP) to the 5-hydroxyl of shikimate-3-phosphate (S3P) to produce enolpyruvyl shikimate-3-phosphate and inorganic phosphate. In Halorhodospira halophila (strain DSM 244 / SL1) (Ectothiorhodospira halophila (strain DSM 244 / SL1)), this protein is 3-phosphoshikimate 1-carboxyvinyltransferase.